The following is a 158-amino-acid chain: Protein Smg homolog (158 aa).

This sequence belongs to the Smg family.

The chain is Protein Smg homolog from Alteromonas mediterranea (strain DSM 17117 / CIP 110805 / LMG 28347 / Deep ecotype).